The following is a 382-amino-acid chain: MSLQTTTQQIFSCAFGYAPTHTVQAPGRVNLIGEHTDYNDGFVLPCAIDYQTVIACAKRSDRQVRTIAVDYDNQQDIFSLDEPIERHPQQLWSDYVRGVVKYLQQRAADLGGVDMVISGNVPQGAGLSSSASLEVAVGSVFRQLYQLPLSSADIALNGQQAENQFVGCHCGIMDQMISALGEKNSAMLLDCRTLDTRAVPMPSDIAVVIINTNFKRNLVGSEYNTRRQQCEAGARFFGQSSLRDVELAEFAEREHELDPLVAKRVRHVLTENARTLEAANVLARGDLARLAVLMAESHASMRDDFEITVPAVDMLVDIVKTSLGERGGVRMTGGGFGGCVVALMPRERVASVKAAVEQHYQAESGLKETFYVCTASAGAGLC.

34–37 (EHTD) contacts substrate. 124-130 (GAGLSSS) provides a ligand contact to ATP. Mg(2+) contacts are provided by Ser-130 and Glu-162. Asp-174 acts as the Proton acceptor in catalysis. A substrate-binding site is contributed by Tyr-223.

This sequence belongs to the GHMP kinase family. GalK subfamily.

It is found in the cytoplasm. The catalysed reaction is alpha-D-galactose + ATP = alpha-D-galactose 1-phosphate + ADP + H(+). Its pathway is carbohydrate metabolism; galactose metabolism. Functionally, catalyzes the transfer of the gamma-phosphate of ATP to D-galactose to form alpha-D-galactose-1-phosphate (Gal-1-P). The chain is Galactokinase from Erwinia tasmaniensis (strain DSM 17950 / CFBP 7177 / CIP 109463 / NCPPB 4357 / Et1/99).